The chain runs to 510 residues: Insulinoma-associated protein 1 (510 aa).

Basic residues predominate over residues 1 to 12 (MPRGFLVKRSKK). Residues 1–20 (MPRGFLVKRSKKSTPVSYRV) are SNAG domain. 2 disordered regions span residues 1 to 110 (MPRG…SREH) and 176 to 226 (GAEA…PKAI). Residues 2–7 (PRGFLV) are required and sufficient for interaction with KDM1A. The interval 43 to 58 (PPAPSPVPGPLPPPPP) is necessary for interaction with CCND1. Residues 43–59 (PPAPSPVPGPLPPPPPA) show a composition bias toward pro residues. Low complexity-rich tracts occupy residues 64 to 74 (AALAAALACAP) and 209 to 218 (EPPAKAVKAP). Residues 267-287 (FICQLCKEEYADPFALAQHKC) form a C2H2-type 1; atypical zinc finger. The segment at 295–317 (YRCPECAKVFSCPANLASHRRWH) adopts a C2H2-type 2 zinc-finger fold. The segment at 315–362 (RWHKPRPAPAAARAPEPEAAARAEAREAPGGGSDRDTPSPGGVSESGS) is disordered. Residues 329–351 (PEPEAAARAEAREAPGGGSDRDT) are compositionally biased toward basic and acidic residues. C2H2-type zinc fingers lie at residues 367 to 389 (YECHHCAKKFRRQAYLRKHLLAH), 441 to 464 (HLCPVCGESFASKGAQERHLRLLH), and 469 to 492 (FPCKYCPATFYSSPGLTRHINKCH).

This sequence belongs to the INSM1 family. As to quaternary structure, interacts (via the SNAG domain) with HDAC1. Interacts (via the SNAG domain) with HDAC2. Interacts (via the SNAG domain) with KDM1A. Interacts (via the SNAG domain) with RCOR1. Interacts with SORBS1. Interacts (via the N-terminal region) with CCND1 (via cyclin N-terminal domain); the interaction competes with the binding of CCND1 to CDK4 during cell cycle progression and increases its transcriptional repressor activity. Interacts with HDAC3; the interaction increases its transcriptional repressor activity. Expressed in pancreatic duct cells. Expressed in several tumor cell lines of neuroendocrine origin including pheochromocytoma, medullary thyroid carcinoma, insulinoma, medulloblastoma, retinoblastoma, pheochromacytoma, medullary thyroid carcinoma and small cell lung carcinoma.

It is found in the nucleus. In terms of biological role, sequence-specific DNA-binding transcriptional regulator that plays a key role in neurogenesis and neuroendocrine cell differentiation during embryonic and/or fetal development. Binds to the consensus sequence 5'-[TG][TC][TC][TT][GA]GGG[CG]A-3' in target promoters. Acts as a transcriptional repressor of NEUROD1 and INS expression via its interaction with cyclin CCND1 in a cell cycle-independent manner. Negatively regulates skeletal muscle-specific gene expression in endocrine cells of the pituitary by inhibiting the Notch signaling pathway. Represses target gene transcription by recruiting chromatin-modifying factors, such as HDAC1, HDAC2, HDAC3, KDM1A and RCOR1 histone deacetylases. Binds to its own promoter, suggesting autoregulation as a self-control feedback mechanism. Competes with histone H3 for the same binding site on the histone demethylase complex formed by KDM1A and RCOR1, and thereby inhibits demethylation of histone H3 at 'Lys-4'. Promotes the generation and expansion of neuronal basal progenitor cells in the developing neocortex. Involved in the differentiation of endocrine cells of the developing anterior pituitary gland, of the pancreas and intestine, and of sympatho-adrenal cells in the peripheral nervous system. Promotes cell cycle signaling arrest and inhibition of cellular proliferation. This Homo sapiens (Human) protein is Insulinoma-associated protein 1 (INSM1).